Here is a 620-residue protein sequence, read N- to C-terminus: Alkaline nuclease (620 aa).

Positions 1 to 10 (MAAAATPGAK) are enriched in low complexity. 2 disordered regions span residues 1-122 (MAAA…SASA) and 595-620 (ASRSPGRGPAAADTTSSPPTAGRSSR). Basic and acidic residues predominate over residues 11-23 (RPADPARDPDSPP). Over residues 40–49 (RPAPPRPTSP) the composition is skewed to pro residues. Over residues 603–620 (PAAADTTSSPPTAGRSSR) the composition is skewed to low complexity.

Belongs to the herpesviridae alkaline nuclease family. In terms of assembly, interacts with major DNA-binding protein; this interaction increases the nuclease processivity of the alkaline exonuclease.

The protein localises to the host nucleus. It localises to the host cytoplasm. Its function is as follows. Plays a role in processing non linear or branched viral DNA intermediates in order to promote the production of mature packaged unit-length linear progeny viral DNA molecules. Exhibits endonuclease and exonuclease activities and accepts both double-stranded and single-stranded DNA as substrate. Exonuclease digestion of DNA is in the 5'-&gt; 3' direction and the products are 5'-monophosphate nucleosides. Additionally, forms a recombinase with the major DNA-binding protein, which displays strand exchange activity. This chain is Alkaline nuclease, found in Homo sapiens (Human).